We begin with the raw amino-acid sequence, 266 residues long: 2-Cys peroxiredoxin BAS1, chloroplastic (266 aa).

A compositionally biased stretch (low complexity) spans 1 to 16; sequence MASVASSTTLISSPSS. Residues 1 to 25 form a disordered region; the sequence is MASVASSTTLISSPSSRVFPAKSSL. The N-terminal 65 residues, 1 to 65, are a transit peptide targeting the chloroplast; sequence MASVASSTTL…SSTSRRSFAV (65 aa). Residues 73–232 form the Thioredoxin domain; sequence PLVGNKAPDF…TMRTLQALQY (160 aa). C119 (cysteine sulfenic acid (-SOH) intermediate) is an active-site residue.

This sequence belongs to the peroxiredoxin family. AhpC/Prx1 subfamily. As to quaternary structure, homodimer; disulfide-linked, upon oxidation. Interacts with the plastidial thioredoxin CDSP32. Interacts with the plastidial NADPH-dependent thioredoxin reductase ANTR-C.

The protein localises to the plastid. It is found in the chloroplast. It catalyses the reaction a hydroperoxide + [thioredoxin]-dithiol = an alcohol + [thioredoxin]-disulfide + H2O. Its function is as follows. Thiol-specific peroxidase that catalyzes the reduction of hydrogen peroxide and organic hydroperoxides to water and alcohols, respectively. Plays a role in cell protection against oxidative stress by detoxifying peroxides. May be an antioxidant enzyme particularly in the developing shoot and photosynthesizing leaf. This Arabidopsis thaliana (Mouse-ear cress) protein is 2-Cys peroxiredoxin BAS1, chloroplastic (BAS1).